Reading from the N-terminus, the 89-residue chain is Putative protein T-ENOL (89 aa).

Disordered regions lie at residues 1–31 and 54–89; these read MASTSARSGDKKDTWPIQAAASLGGGQKASL and RSHMNPMPDKEKQTKDQGTQISRHVFFTKTRGTDTR.

Specifically expressed in testis (at protein level).

This chain is Putative protein T-ENOL, found in Rattus norvegicus (Rat).